Reading from the N-terminus, the 684-residue chain is Protein-glutamine gamma-glutamyltransferase 4 (684 aa).

Catalysis depends on residues Cys-268, His-327, and Asp-350. Ca(2+) is bound by residues Asn-390, Asp-392, Glu-442, and Glu-447.

This sequence belongs to the transglutaminase superfamily. Transglutaminase family. As to quaternary structure, homodimer. Ca(2+) is required as a cofactor. Prostate.

It catalyses the reaction L-glutaminyl-[protein] + L-lysyl-[protein] = [protein]-L-lysyl-N(6)-5-L-glutamyl-[protein] + NH4(+). Associated with the mammalian reproductive process. Catalyzes the cross-linking of proteins and the conjugation of polyamines to specific proteins in the seminal tract. This is Protein-glutamine gamma-glutamyltransferase 4 (TGM4) from Homo sapiens (Human).